Consider the following 531-residue polypeptide: Ceramide kinase (531 aa).

Positions 1–115 (MGAMGAAEPL…SADEQLCHLW (115 aa)) are essential for enzyme activity. The required for binding to sulfatide and phosphoinositides stretch occupies residues 1-125 (MGAMGAAEPL…LQTLRGLLES (125 aa)). The DAGKc domain occupies 128 to 278 (SRPKHLLVFI…IDVSSVHYHN (151 aa)). ATP contacts are provided by residues 138 to 140 (NPF) and 170 to 174 (TEHAN). 195 to 198 (GGDG) is a substrate binding site. The active-site Proton donor/acceptor is the Asp197. Residues Glu202, 239-241 (GST), Arg304, and Arg310 each bind ATP. Phosphoserine is present on residues Ser340 and Ser408. ATP is bound at residue 502–504 (DGE).

It depends on Ca(2+) as a cofactor. Mg(2+) is required as a cofactor. High level expression in heart, brain, testis and pancreas; low expression in spleen, liver and lung; not detected in skeletal muscle.

It localises to the cytoplasm. The protein localises to the cell membrane. The catalysed reaction is an N-acylsphing-4-enine + ATP = an N-acylsphing-4-enine 1-phosphate + ADP + H(+). It carries out the reaction N-(hexanoyl)sphing-4-enine + ATP = N-hexanoylsphing-4-enine 1-phosphate + ADP + H(+). It catalyses the reaction N-(acetyl)-sphing-4-enine + ATP = N-(acetyl)-sphing-4-enine-1-phosphate + ADP + H(+). The enzyme catalyses N-hexadecanoylsphing-4-enine + ATP = N-(hexadecanoyl)-sphing-4-enine-1-phosphate + ADP + H(+). The catalysed reaction is N-hexanoyl-(4R)-hydroxysphinganine + ATP = N-hexanoyl-(4R)-hydroxysphinganine-1-phosphate + ADP + H(+). Catalyzes specifically the phosphorylation of ceramide to form ceramide 1-phosphate. Acts efficiently on natural and analog ceramides (C6, C8, C16 ceramides, and C8-dihydroceramide), to a lesser extent on C2-ceramide and C6-dihydroceramide, but not on other lipids, such as various sphingosines. Shows a greater preference for D-erythro isomer of ceramides. Binds phosphoinositides. The sequence is that of Ceramide kinase (Cerk) from Mus musculus (Mouse).